Consider the following 1045-residue polypeptide: MSLPLKTIVHLVKPFACTARFSARYPIHVIVVAVLLSAAAYLSVTQSYLNEWKLDSNQYSTYLSIKPDELFEKCTHYYRSPVSDTWKLLSSKEAADIYTPFHYYLSTISFQSKDNSTTLPSLDDVIYSVDHTRYLLSEEPKIPTELVSENGTKWRLRNNSNFILDLHNIYRNMVKQFSNKTSEFDQFDLFIILAAYLTLFYTLCCLFNDMRKIGSKFWLSFSALSNSACALYLSLYTTHSLLKKPASLLSLVIGLPFIVVIIGFKHKVRLAAFSLQKFHRISIDKKITVSNIIYEAMFQEGAYLIRDYLFYISSFIGCAIYARHLPGLVNFCILSTFMLVFDLLLSATFYSAILSMKLEINIIHRSTVIRQTLEEDGVVPTTADIIYKDETASEPHFLRSNVAIILGKASVIGLLLLINLYVFTDKLNATILNTVYFDSTIYSLPNFINYKDIGNLSNQVIISVLPKQYYTPLKKYHQIEDSVLLIIDSVSNAIRDQFISKLLFFAFAVSISINVYLLNAAKIHTGYMNFQPQSNKIDDLVVQQKSATIEFSETRSMPASSGLETPVTAKDIIISEEIQNNECVYALSSQDEPIRPLSNLVELMEKEQLKNMNNTEVSNLVVNGKLPLYSLEKKLEDTTRAVLVRRKALSTLAESPILVSEKLPFRNYDYDRVFGACCENVIGYMPIPVGVIGPLIIDGTSYHIPMATTEGCLVASAMRGCKAINAGGGATTVLTKDGMTRGPVVRFPTLIRSGACKIWLDSEEGQNSIKKAFNSTSRFARLQHIQTCLAGDLLFMRFRTTTGDAMGMNMISKGVEYSLKQMVEEYGWEDMEVVSVSGNYCTDKKPAAINWIEGRGKSVVAEATIPGDVVKSVLKSDVSALVELNISKNLVGSAMAGSVGGFNAHAANLVTALFLALGQDPAQNVESSNCITLMKEVDGDLRISVSMPSIEVGTIGGGTVLEPQGAMLDLLGVRGPHPTEPGANARQLARIIACAVLAGELSLCSALAAGHLVQSHMTHNRKTNKANELPQPSNKGPPCKTSALL.

Residues 1–24 lie on the Cytoplasmic side of the membrane; sequence MSLPLKTIVHLVKPFACTARFSAR. A helical transmembrane segment spans residues 25–45; that stretch reads YPIHVIVVAVLLSAAAYLSVT. Over 46–186 the chain is Lumenal; it reads QSYLNEWKLD…FSNKTSEFDQ (141 aa). N-linked (GlcNAc...) asparagine glycans are attached at residues Asn115, Asn150, Asn158, and Asn179. The chain crosses the membrane as a helical span at residues 187–207; sequence FDLFIILAAYLTLFYTLCCLF. The SSD domain maps to 188–356; that stretch reads DLFIILAAYL…ATFYSAILSM (169 aa). The Cytoplasmic portion of the chain corresponds to 208 to 216; the sequence is NDMRKIGSK. Residues 217–237 form a helical membrane-spanning segment; that stretch reads FWLSFSALSNSACALYLSLYT. Topologically, residues 238 to 243 are lumenal; the sequence is THSLLK. A helical membrane pass occupies residues 244–264; sequence KPASLLSLVIGLPFIVVIIGF. The Cytoplasmic segment spans residues 265-301; sequence KHKVRLAAFSLQKFHRISIDKKITVSNIIYEAMFQEG. A helical membrane pass occupies residues 302 to 322; sequence AYLIRDYLFYISSFIGCAIYA. Residues 323-324 lie on the Lumenal side of the membrane; that stretch reads RH. Residues 325-345 traverse the membrane as a helical segment; sequence LPGLVNFCILSTFMLVFDLLL. Residues 346–402 lie on the Cytoplasmic side of the membrane; the sequence is SATFYSAILSMKLEINIIHRSTVIRQTLEEDGVVPTTADIIYKDETASEPHFLRSNV. Residues 403–423 traverse the membrane as a helical segment; that stretch reads AIILGKASVIGLLLLINLYVF. The Lumenal segment spans residues 424 to 497; it reads TDKLNATILN…DSVSNAIRDQ (74 aa). Residues Asn428 and Asn455 are each glycosylated (N-linked (GlcNAc...) asparagine). A helical transmembrane segment spans residues 498 to 518; it reads FISKLLFFAFAVSISINVYLL. Residues 519-1045 are Cytoplasmic-facing; it reads NAAKIHTGYM…GPPCKTSALL (527 aa). At Thr565 the chain carries Phosphothreonine. The active-site Charge relay system is the Glu710. CoA is bound at residue 716–722; the sequence is SAMRGCK. NADP(+)-binding positions include 777–779 and 804–812; these read SRF and DAMGMNMIS. Catalysis depends on Lys844, which acts as the Charge relay system. 873–875 provides a ligand contact to CoA; it reads VLK. Residue Asp920 is the Charge relay system of the active site. A CoA-binding site is contributed by 1015–1016; the sequence is SH. His1016 acts as the Proton donor in catalysis. The segment at 1018 to 1045 is disordered; it reads THNRKTNKANELPQPSNKGPPCKTSALL. An NADP(+)-binding site is contributed by 1020-1021; sequence NR.

Belongs to the HMG-CoA reductase family.

The protein resides in the endoplasmic reticulum membrane. The protein localises to the nucleus envelope. The catalysed reaction is (R)-mevalonate + 2 NADP(+) + CoA = (3S)-3-hydroxy-3-methylglutaryl-CoA + 2 NADPH + 2 H(+). The protein operates within metabolic intermediate biosynthesis; (R)-mevalonate biosynthesis; (R)-mevalonate from acetyl-CoA: step 3/3. In terms of biological role, HMG-CoA reductase; part of the first module of ergosterol biosynthesis pathway constitutes by the early steps of the pathway, conserved across all eukaryotes, and which results in the formation of mevalonate from acetyl-coenzyme A (acetyl-CoA). HMG1 and HMG2 catalyze the reduction of hydroxymethylglutaryl-CoA (HMG-CoA) to mevalonate that is the rate-limiting step within the first mosule. The first module starts with the action of the cytosolic acetyl-CoA acetyltransferase ERG10 that catalyzes the formation of acetoacetyl-CoA. The hydroxymethylglutaryl-CoA synthase ERG13 then condenses acetyl-CoA with acetoacetyl-CoA to form HMG-CoA. The rate-limiting step of the early module is the reduction to mevalonate by the 3-hydroxy-3-methylglutaryl-coenzyme A (HMG-CoA) reductases HMG1 and HMG2 which are derived from a single ancestral HMGR gene by gene duplication. In Saccharomyces cerevisiae (strain ATCC 204508 / S288c) (Baker's yeast), this protein is 3-hydroxy-3-methylglutaryl-coenzyme A reductase 2.